We begin with the raw amino-acid sequence, 329 residues long: Probable nicotianamine synthase 7 (329 aa).

The protein belongs to the nicotianamine synthase (NAS)-like family.

It carries out the reaction 3 S-adenosyl-L-methionine = nicotianamine + 3 S-methyl-5'-thioadenosine + 3 H(+). Its function is as follows. Synthesizes nicotianamine, a polyamine that is the first intermediate in the synthesis of the phytosiderophores of the mugineic acid type found in gramineae which serves as a sensor for the physiological iron status within the plant, and/or might be involved in the transport of iron. The chain is Probable nicotianamine synthase 7 (NAS7) from Hordeum vulgare (Barley).